Here is a 107-residue protein sequence, read N- to C-terminus: Quaternary ammonium compound-resistance protein QacG (107 aa).

A run of 4 helical transmembrane segments spans residues 1 to 21 (MHYL…SFLK), 26 to 46 (FTKL…FYFL), 57 to 77 (ITYA…SVIV), and 84 to 104 (LISI…NVFG).

Belongs to the drug/metabolite transporter (DMT) superfamily. Small multidrug resistance (SMR) (TC 2.A.7.1) family.

Its subcellular location is the cell membrane. Functionally, multidrug exporter. Is implicated for the resistance to bacteriocidal quaternary ammonium compounds. This chain is Quaternary ammonium compound-resistance protein QacG (qacG), found in Staphylococcus sp. (strain ST94).